We begin with the raw amino-acid sequence, 391 residues long: E1B 55 kDa protein (391 aa).

The residue at position 387 (S387) is a Phosphoserine.

This sequence belongs to the adenoviridae E1B 55 kDa protein family. As to quaternary structure, interacts with host PML-4 and PML-5; this interaction promotes efficient subnuclear targeting of E1B-55K to PML nuclear bodies. Interacts with E4-ORF3 protein. Interacts with E4-ORF6 protein.

It is found in the host nucleus. It localises to the host cytoplasm. Plays a major role to prevent cellular inhibition of viral genome replication. Assembles an SCF-like E3 ubiquitin ligase complex based on the cellular proteins ELOB, ELOC, CUL5 and RBX1, in cooperation with viral E4orf6. This viral RING-type ligase ubiquitinates cellular substrates and targets them to proteasomal degradation: TP53/p53, LIG4, MRE11-RAD50-NBS1 (MRN) complex, ITGA3, DAXX and BLM. E1B-55K probably acts as the substrate-specific adapter of the SCF-like E3 ubiquitin ligase complex. Degradation of host TP53/p53 activity is essential for preventing E1A-induced TP53 accumulation that would otherwise lead to cell apoptosis and growth arrest. E1B-55K also inactivates TP53 transcription-factor activity by binding its transactivation domain. E1B-55K also functions as a SUMO1 E3 ligase for TP53 which causes the latter to be sequestered in promyelocytic leukemia (PML) nuclear bodies thereby contributing to maximal inhibition of TP53 function. This is E1B 55 kDa protein from Tree shrew adenovirus serotype 1 (TSAdV-1).